A 416-amino-acid polypeptide reads, in one-letter code: Serine hydroxymethyltransferase (416 aa).

(6S)-5,6,7,8-tetrahydrofolate-binding positions include L118 and 122–124 (GHL). Position 226 is an N6-(pyridoxal phosphate)lysine (K226). Residue 350 to 352 (SPF) participates in (6S)-5,6,7,8-tetrahydrofolate binding.

Belongs to the SHMT family. Homodimer. Pyridoxal 5'-phosphate serves as cofactor.

It is found in the cytoplasm. It carries out the reaction (6R)-5,10-methylene-5,6,7,8-tetrahydrofolate + glycine + H2O = (6S)-5,6,7,8-tetrahydrofolate + L-serine. Its pathway is one-carbon metabolism; tetrahydrofolate interconversion. It participates in amino-acid biosynthesis; glycine biosynthesis; glycine from L-serine: step 1/1. In terms of biological role, catalyzes the reversible interconversion of serine and glycine with tetrahydrofolate (THF) serving as the one-carbon carrier. This reaction serves as the major source of one-carbon groups required for the biosynthesis of purines, thymidylate, methionine, and other important biomolecules. Also exhibits THF-independent aldolase activity toward beta-hydroxyamino acids, producing glycine and aldehydes, via a retro-aldol mechanism. This chain is Serine hydroxymethyltransferase, found in Sulfurovum sp. (strain NBC37-1).